The chain runs to 140 residues: MAEHPRQLQDPAHQPRSHQVVKAATAATAGGSLLVPSGLILAGTVIALTLATPLFVIFSPVLVPAVITVSLIIMGFLASGGFGVAAVTVLSWIYRYVTGRHPPGADQLDHARMKLASKAREMKDRAEQFGQQHVTGSQGS.

A run of 2 helical transmembrane segments spans residues 31-51 and 75-95; these read GSLL…LTLA and GFLA…WIYR.

It belongs to the oleosin family. Expressed in seeds.

The protein resides in the lipid droplet. It is found in the membrane. Functionally, may have a structural role to stabilize the lipid body during desiccation of the seed by preventing coalescence of the oil. Probably interacts with both lipid and phospholipid moieties of lipid bodies. May also provide recognition signals for specific lipase anchorage in lipolysis during seedling growth. This Corylus avellana (European hazel) protein is Oleosin Cor a 13.